We begin with the raw amino-acid sequence, 510 residues long: ATP synthase subunit alpha 1 (510 aa).

169-176 (GDRQTGKT) provides a ligand contact to ATP.

It belongs to the ATPase alpha/beta chains family. In terms of assembly, F-type ATPases have 2 components, CF(1) - the catalytic core - and CF(0) - the membrane proton channel. CF(1) has five subunits: alpha(3), beta(3), gamma(1), delta(1), epsilon(1). CF(0) has three main subunits: a(1), b(2) and c(9-12). The alpha and beta chains form an alternating ring which encloses part of the gamma chain. CF(1) is attached to CF(0) by a central stalk formed by the gamma and epsilon chains, while a peripheral stalk is formed by the delta and b chains.

Its subcellular location is the cell inner membrane. It carries out the reaction ATP + H2O + 4 H(+)(in) = ADP + phosphate + 5 H(+)(out). In terms of biological role, produces ATP from ADP in the presence of a proton gradient across the membrane. The alpha chain is a regulatory subunit. The chain is ATP synthase subunit alpha 1 from Marinomonas sp. (strain MWYL1).